Consider the following 188-residue polypeptide: U1 small nuclear ribonucleoprotein C-2 (188 aa).

The Matrin-type zinc-finger motif lies at 4–36 (YYCDYCDVFLVSESPSVRKAHNSGRNHLTNVRD). A disordered region spans residues 57-188 (FETGGGNSTS…MNPDRARQLG (132 aa)). Positions 72 to 82 (GNPPGSQPGPP) are enriched in pro residues. Positions 109–124 (AMLALMNGQNGMSSPG) are enriched in low complexity. Residues 125-141 (SGPPPMRFAGPPIPNNM) are compositionally biased toward pro residues.

The protein belongs to the U1 small nuclear ribonucleoprotein C family. In terms of assembly, U1 snRNP is composed of the 7 core Sm proteins B/B', D1, D2, D3, E, F and G that assemble in a heptameric protein ring on the Sm site of the small nuclear RNA to form the core snRNP, and at least 3 U1 snRNP-specific proteins U1-70K, U1-A and U1-C. U1-C interacts with U1 snRNA and the 5' splice-site region of the pre-mRNA.

The protein localises to the nucleus. Functionally, component of the spliceosomal U1 snRNP, which is essential for recognition of the pre-mRNA 5' splice-site and the subsequent assembly of the spliceosome. U1-C is directly involved in initial 5' splice-site recognition for both constitutive and regulated alternative splicing. The interaction with the 5' splice-site seems to precede base-pairing between the pre-mRNA and the U1 snRNA. Stimulates commitment or early (E) complex formation by stabilizing the base pairing of the 5' end of the U1 snRNA and the 5' splice-site region. The protein is U1 small nuclear ribonucleoprotein C-2 of Puccinia graminis f. sp. tritici (strain CRL 75-36-700-3 / race SCCL) (Black stem rust fungus).